The primary structure comprises 1706 residues: MGIQLSTIQTPQFHELFEEELPEYHNERSLGDSHFLRTFRMQDRKGYDVLIKVFVNKLPEISLSSIVNLLKEEQENISYRVPNAVPYIKTLVTLRAAYLVRPYVTHNLYDRISTRPFLELTEKKWIMFQLLKGISDCHRLGVCHGDIKSENILITSWNWAYLSDFSSFKPTYLPEDNPADYGYFFDTSSRRVCNIAPERFVPASQLQPAPLSPAMDIFSLGCVFAELLLEESPLFTLSQLFSYKAHGSYDLQSVLEQIEDKSTQNMILSMLDRDPSQRLSADAYLQKYRGTVFPACFYDTLYDYCIGLVDPSGILSAKQPNDACSLYGSRIDDIYRDIMPPNNNDISNLMHTPHEYNGIDSYSVPLFTTLDEFYNKNPAAKNWYLRLYNTMQEKKGFEDKEQGSTPAPSPSVIEDISSIETDENHLYGAAVLLPIVLSTIRHVNTRESKINALSLVQILSRNICDESKLDTVLPFVMTLLRDQYADVRISALITITRLVSNVTSIAPINAFLFQEYLFPDLQHFLFDMNSRTRATYASCLPILAKQASKFLNLAQSLRNAGILSFPESEYENINHGKAELLFETGRHDLVVTVERHVSTLLADSSSIVRRSLLNALAPLCVFFGKAKSNDLILSHLITYLNDTDWMLRCAFFESITGLSIFIGPRSVDEYILPLMLQALVDPEPAVLESVLGSFSGLIELHLFEKLVVVDILQLVLPLVAVPNAYIRRAALSVIYSAYQSFDDIDRDCIVTPLLRPYLMSNLCDINSLEKLDQFILPMVSDSVWSTLTRWYEESENSSFWKCDKDASYSSLDVSNDSLLGRTKNLQKREIMHHAEVYTHKKISLTGHVIITSTEMLELSEDDQKWADIIKEMGVDVKHLWVLANLRDYVKKTKINLNGINYKRQSGLRELNTYPNAPLHILPETIFWNPERPPSSSIANETFLDRNSYAESIQTSRSYNDDLIARDPIAYVGTDMTNAFGTTTKPKDVSQSDIKVDINRESNSDNGETITGTHDVYRQTDNPEIKLPSDTASSKVDTHNPTVTQPTDDTGGLNSYNTENPLLTNNTLEPSSVEAIVSSKDSDKHAKESKGKSLAPLISSRVSTNDTTNVAGIRSQRSFTTHIDLKKLTTRQNGAKKSSYTGTNPCVLNYLNKIYAEAAASTLNVGAAVSPSWASNIPLRRRTKVSAKAANKIVQTHEWHPEGSRVAQIYLGSLLDGGTKKVLVSPDSSFFVTLGSDGVVRAWQLVESVRHISTMRCECRLSYGHTRRNGERNRFSVVNGCFLGNTYAFASVTQDGSVEVHRLDVNNQRHTLISAGRIPNLDFSDSVTSMEASTFHDGSIRLVVVTKWSRIVYLDVGMMRVLSSDQLPLQCGSATSVVVSEGCNWALIGTTKGWLLLWDLRFGTLSCSWHMPARIDQMHLLLDVTKKRSNVNEYTSGNNNSPVTKVPGSSSTSSSSTQPINSTIPINPLENHGMLNSFGSTTVSISFSVLTNLDNKEVNLEDAVPASHRSASGIVNFDVEKGKTEEVFLENWNSSLTSPIPVSVGIDAFNEKKKFDIDSGNDMGLRDLNTKFDSPWPCISSPIYRYRGPSAGSVEREPLFLIAASGSPHAFIWNPHNVSASSSVTNDSESSKLSLIHNKPPIYQKVSEQQNVRPKSSGVSRPLLFLQQQKNLPSENRLHPIVDMAFLYQPYAIVLIVDAFGSLELWT.

The Protein kinase domain maps to 24–293 (YHNERSLGDS…YLQKYRGTVF (270 aa)). Residues 30–38 (LGDSHFLRT) and Lys52 contribute to the ATP site. One copy of the HEAT 1 repeat lies at 56–94 (NKLPEISLSSIVNLLKEEQENISYRVPNAVPYIKTLVTL). Asp146 acts as the Proton acceptor in catalysis. HEAT repeat units lie at residues 426–465 (LYGA…NICD), 466–504 (ESKL…NVTS), 511–549 (FLFQ…QASK), 587–625 (HDLV…FFGK), 626–664 (AKSN…FIGP), 665–703 (RSVD…LHLF), and 705–743 (KLVV…SFDD). Ser957 is subject to Phosphoserine. Position 958 is a phosphotyrosine (Tyr958). The tract at residues 982-1099 (TTKPKDVSQS…GKSLAPLISS (118 aa)) is disordered. Basic and acidic residues-rich tracts occupy residues 984–1002 (KPKD…RESN) and 1014–1023 (DVYRQTDNPE). Over residues 1029–1055 (DTASSKVDTHNPTVTQPTDDTGGLNSY) the composition is skewed to polar residues. The span at 1056-1069 (NTENPLLTNNTLEP) shows a compositional bias: low complexity. Residues 1079-1090 (KDSDKHAKESKG) show a composition bias toward basic and acidic residues. 2 WD repeats span residues 1213-1252 (LLDG…RHIS) and 1368-1407 (LQCG…LSCS). The segment covering 1431-1442 (NEYTSGNNNSPV) has biased composition (polar residues). Positions 1431-1461 (NEYTSGNNNSPVTKVPGSSSTSSSSTQPINS) are disordered. One copy of the WD 3 repeat lies at 1577–1622 (CISSPIYRYRGPSAGSVEREPLFLIAASGSPHAFIWNPHNVSASSS).

It belongs to the protein kinase superfamily. Ser/Thr protein kinase family. In terms of assembly, component of the autophagy-specific vps34 PI3-kinase complex I composed of vps15, atg6, pik3/vps34, atg14 and atg38. Also a component of the vps34 PI3-kinase complex II composed of atg6, pik3, vps15 and vps38.

The catalysed reaction is L-seryl-[protein] + ATP = O-phospho-L-seryl-[protein] + ADP + H(+). It catalyses the reaction L-threonyl-[protein] + ATP = O-phospho-L-threonyl-[protein] + ADP + H(+). Functions as a part of the autophagy-specific VPS34 PI3-kinase complex I that plays a role in autophagosome assembly. This complex is essential to recruit the atg8-phosphatidylinositol conjugate and the atg12-atg5 conjugate to the pre-autophagosomal structure. Also functions as part of the VPS34 PI3-kinase complex II. The chain is Serine/threonine-protein kinase vps15 from Schizosaccharomyces pombe (strain 972 / ATCC 24843) (Fission yeast).